The primary structure comprises 266 residues: Non-structural maintenance of chromosomes element 1 homolog (266 aa).

The tract at residues 1-102 (MQGSTRRMSV…SISKMATDFA (102 aa)) is interaction with NSMCE3. Residues 191 to 232 (CNICHSLLIQGQSCETCGIRMHLPCVAKYFQSNAEPRCPHCN) form an RING-type; atypical zinc finger. A disordered region spans residues 245-266 (PEKERESGVSKSNKKSLRSRQH). Ser251 bears the Phosphoserine mark. Positions 256–266 (SNKKSLRSRQH) are enriched in basic residues.

Belongs to the NSE1 family. As to quaternary structure, component of the SMC5-SMC6 complex which consists at least of SMC5, SMC6, NSMCE2, NSMCE1, NSMCE4A or EID3 and NSMCE3. NSMCE1, NSMCE4A or EID3 and NSMCE3 probably form a subcomplex that bridges the head domains of the SMC5-SMC6 heterodimer. Interacts with NSMCE3. Post-translationally, ubiquitinated.

It localises to the nucleus. The protein localises to the chromosome. Its subcellular location is the telomere. It carries out the reaction S-ubiquitinyl-[E2 ubiquitin-conjugating enzyme]-L-cysteine + [acceptor protein]-L-lysine = [E2 ubiquitin-conjugating enzyme]-L-cysteine + N(6)-ubiquitinyl-[acceptor protein]-L-lysine.. Its function is as follows. RING-type zinc finger-containing E3 ubiquitin ligase that assembles with melanoma antigen protein (MAGE) to catalyze the direct transfer of ubiquitin from E2 ubiquitin-conjugating enzyme to a specific substrate. Within MAGE-RING ubiquitin ligase complex, MAGE stimulates and specifies ubiquitin ligase activity likely through recruitment and/or stabilization of the E2 ubiquitin-conjugating enzyme at the E3:substrate complex. Involved in maintenance of genome integrity, DNA damage response and DNA repair. NSMCE3/MAGEG1 and NSMCE1 ubiquitin ligase are components of SMC5-SMC6 complex and may positively regulate homologous recombination-mediated DNA repair. The chain is Non-structural maintenance of chromosomes element 1 homolog (NSMCE1) from Pongo abelii (Sumatran orangutan).